Consider the following 470-residue polypeptide: Putative multidrug resistance protein MdtD (470 aa).

Topologically, residues 1-11 (MTEFPDNTRWQ) are periplasmic. The helical transmembrane segment at 12 to 32 (LWIVAFGFFMQSLDTTIVNTA) threads the bilayer. Residues 33 to 48 (LPSMAKSLGESPLHMH) lie on the Cytoplasmic side of the membrane. The helical transmembrane segment at 49 to 69 (MVVVSYVLTVAVMLPASGWLA) threads the bilayer. At 70–76 (DKIGVRN) the chain is on the periplasmic side. A helical membrane pass occupies residues 77–97 (IFFAAIVLFTLGSLFCALSGT). The Cytoplasmic segment spans residues 98–101 (LNQL). The chain crosses the membrane as a helical span at residues 102–124 (VLARVLQGVGGAMMVPVGRLTVM). The Periplasmic segment spans residues 125 to 137 (KIVPRAQYMAAMT). The chain crosses the membrane as a helical span at residues 138–158 (FVALPGQIGPLLGPALGGVLV). The Cytoplasmic segment spans residues 159–164 (EYASWH). The chain crosses the membrane as a helical span at residues 165 to 185 (WIFLINIPVGIVGAMATFMLM). The Periplasmic segment spans residues 186–196 (PNYTIETRRFD). The chain crosses the membrane as a helical span at residues 197–217 (LPGFLLLAIGMAVLTLALDGS). The Cytoplasmic segment spans residues 218-224 (KSMGISP). A helical membrane pass occupies residues 225–245 (WTLAGLAAGGAAAILLYLFHA). At 246-262 (KKNSGALFSLRLFRTPT) the chain is on the periplasmic side. The helical transmembrane segment at 263–283 (FSLGLLGSFAGRIGSGMLPFM) threads the bilayer. Residues 284–285 (TP) lie on the Cytoplasmic side of the membrane. Residues 286-306 (VFLQIGLGFSPFHAGLMMIPM) traverse the membrane as a helical segment. Topologically, residues 307 to 341 (VLGSMGMKRIVVQIVNRFGYRRVLVATTLGLALVS) are periplasmic. The helical transmembrane segment at 342–362 (LLFMSVALLGWYYLLPLVLLL) threads the bilayer. The Cytoplasmic portion of the chain corresponds to 363-395 (QGMVNSARFSSMNTLTLKDLPDTLASSGNSLLS). A helical membrane pass occupies residues 396–416 (MIMQLSMSIGVTIAGMLLGMF). At 417-430 (GQQHIGIDSSATHH) the chain is on the periplasmic side. The helical transmembrane segment at 431-451 (VFMYTWLCMAVIIALPAIIFA) threads the bilayer. The Cytoplasmic segment spans residues 452–470 (RVPNDTQQNMVISRRKRSL).

It belongs to the major facilitator superfamily. TCR/Tet family.

The protein localises to the cell inner membrane. The protein is Putative multidrug resistance protein MdtD of Salmonella typhi.